Reading from the N-terminus, the 574-residue chain is Glycine--tRNA ligase (574 aa).

2 residues coordinate substrate: Arg96 and Glu162. ATP is bound by residues 194 to 196 (RNE), 204 to 209 (IRLREF), 327 to 328 (EC), and 450 to 453 (GIDR). Residue 209–213 (FTQAE) participates in substrate binding. Residue 446–450 (EPSYG) participates in substrate binding.

Belongs to the class-II aminoacyl-tRNA synthetase family.

The protein localises to the cytoplasm. It carries out the reaction tRNA(Gly) + glycine + ATP = glycyl-tRNA(Gly) + AMP + diphosphate. Its function is as follows. Catalyzes the attachment of glycine to tRNA(Gly). This is Glycine--tRNA ligase from Methanococcus vannielii (strain ATCC 35089 / DSM 1224 / JCM 13029 / OCM 148 / SB).